A 610-amino-acid chain; its full sequence is UvrABC system protein C (610 aa).

A GIY-YIG domain is found at 16-94; sequence SQPGVYRMYD…IKLYQPRYNV (79 aa). One can recognise a UVR domain in the interval 204 to 239; the sequence is DQVLTQLIARMEKASQDLAFEEAARIRDQIQAVRRV.

The protein belongs to the UvrC family. As to quaternary structure, interacts with UvrB in an incision complex.

Its subcellular location is the cytoplasm. In terms of biological role, the UvrABC repair system catalyzes the recognition and processing of DNA lesions. UvrC both incises the 5' and 3' sides of the lesion. The N-terminal half is responsible for the 3' incision and the C-terminal half is responsible for the 5' incision. The protein is UvrABC system protein C of Salmonella agona (strain SL483).